The following is a 122-amino-acid chain: Biogenesis of lysosome-related organelles complex 1 subunit CNL1 (122 aa).

Residues 1 to 10 are compositionally biased toward basic and acidic residues; the sequence is MQDNSSHSRE. The segment at 1 to 21 is disordered; that stretch reads MQDNSSHSRESASAGDDPLGI. Positions 63–95 form a coiled coil; the sequence is ENTIDKNIAKFKELLEKCDTLENHYEMLNQLAI.

Belongs to the BLOC1S4 family. As to quaternary structure, component of the biogenesis of lysosome-related organelles complex-1 (BLOC-1) composed of at least BLI1, BLS1, CNL1, KXD1, SNN1 and VAB2.

Its subcellular location is the cytoplasm. Functionally, component of the biogenesis of lysosome-related organelles complex-1 (BLOC-1), a complex that is involved in endosomal cargo sorting. The protein is Biogenesis of lysosome-related organelles complex 1 subunit CNL1 (CLN1) of Saccharomyces cerevisiae (strain RM11-1a) (Baker's yeast).